A 267-amino-acid chain; its full sequence is Proenkephalin-A (267 aa).

The N-terminal stretch at 1-24 (MARFLTLCTWLLLLGPGLLATVRA) is a signal peptide. Disulfide bonds link cysteine 26–cysteine 48, cysteine 30–cysteine 52, and cysteine 33–cysteine 65. Positions 163–175 (TGDNRERSHHQDG) are enriched in basic and acidic residues. The interval 163-182 (TGDNRERSHHQDGSDNEEEV) is disordered. Propeptides lie at residues 196–207 (SPQLEDEAKELQ) and 217–227 (VGRPEWWMDYQ). Serine 251 is modified (phosphoserine).

The protein belongs to the opioid neuropeptide precursor family. In terms of processing, proenkephalin-A is cleaved by CTSL to generate Met-enkephalin. Post-translationally, processed and degraded by ACE. Probably cleaved by ACE. In terms of processing, processed by ACE to generate Met-enkephalin in the nucleus accumbens of the brain. Post-translationally, the N-terminal domain contains 6 conserved cysteines thought to be involved in disulfide bonding and/or processing.

It is found in the cytoplasmic vesicle. The protein localises to the secretory vesicle. Its subcellular location is the chromaffin granule lumen. The protein resides in the secreted. Neuropeptide that competes with and mimic the effects of opiate drugs. They play a role in a number of physiologic functions, including pain perception and responses to stress. Its function is as follows. Met-enkephalin-Arg-Phe neuropeptide acts as a strong ligand of Mu-type opioid receptor OPRM1. Met-enkephalin-Arg-Phe-binding to OPRM1 in the nucleus accumbens of the brain increases activation of OPRM1, leading to long-term synaptic depression of glutamate release. In terms of biological role, increases glutamate release in the striatum and decreases GABA concentration in the striatum. Functionally, increases glutamate release in the striatum. This chain is Proenkephalin-A, found in Homo sapiens (Human).